A 456-amino-acid chain; its full sequence is Alcohol acyltransferase 17 (456 aa).

Active-site proton acceptor residues include histidine 166 and aspartate 382.

This sequence belongs to the plant acyltransferase family. Expressed in fruit.

In terms of biological role, involved in the biosynthesis of volatile esters which confer kiwifruit flavor. Alcohol acyl transferase that can use a wide range of alcohols as substrate to produce esters. The sequence is that of Alcohol acyltransferase 17 from Actinidia deliciosa (Kiwi).